Reading from the N-terminus, the 619-residue chain is MPDPAAHLPFFYGSISRAEAEEHLKLAGMADGLFLLRQCLRSLGGYVLSLVHDVRFHHFPIERQLNGTYAIAGGKAHCGPAELCEFYSRDPDGLPCNLRKPCNRPSGLEPQPGVFDCLRDAMVRDYVRQTWKLEGEALEQAIISQAPQVEKLIATTAHERMPWYHSSLTREEAERKLYSGAQTDGKFLLRPRKEQGTYALSLIYGKTVYHYLISQDKAGKYCIPEGTKFDTLWQLVEYLKLKADGLIYCLKEACPNSSASNASGAAAPTLPAHPSTLTHPQRRIDTLNSDGYTPEPARITSPDKPRPMPMDTSVYESPYSDPEELKDKKLFLKRDNLLIADIELGCGNFGSVRQGVYRMRKKQIDVAIKVLKQGTEKADTEEMMREAQIMHQLDNPYIVRLIGVCQAEALMLVMEMAGGGPLHKFLVGKREEIPVSNVAELLHQVSMGMKYLEEKNFVHRDLAARNVLLVNRHYAKISDFGLSKALGADDSYYTARSAGKWPLKWYAPECINFRKFSSRSDVWSYGVTMWEALSYGQKPYKKMKGPEVMAFIEQGKRMECPPECPPELYALMSDCWIYKWEDRPDFLTVEQRMRACYYSLASKVEGPPGSTQKAEAACA.

Positions 10–102 (FFYGSISRAE…GLPCNLRKPC (93 aa)) constitute an SH2 1 domain. Positions 103–162 (NRPSGLEPQPGVFDCLRDAMVRDYVRQTWKLEGEALEQAIISQAPQVEKLIATTAHERMP) are interdomain A. The SH2 2 domain maps to 163-254 (WYHSSLTREE…GLIYCLKEAC (92 aa)). A Phosphotyrosine modification is found at tyrosine 248. Residues 255–337 (PNSSASNASG…KKLFLKRDNL (83 aa)) are interdomain B. Residues 260–309 (SNASGAAAPTLPAHPSTLTHPQRRIDTLNSDGYTPEPARITSPDKPRPMP) form a disordered region. Serine 289 is subject to Phosphoserine. The residue at position 292 (tyrosine 292) is a Phosphotyrosine. Position 315 is a phosphotyrosine; by LCK (tyrosine 315). A Phosphotyrosine modification is found at tyrosine 319. Positions 338 to 600 (LIADIELGCG…QRMRACYYSL (263 aa)) constitute a Protein kinase domain. ATP-binding positions include 345 to 352 (GCGNFGSV) and lysine 369. Aspartate 461 functions as the Proton acceptor in the catalytic mechanism. Residues tyrosine 492 and tyrosine 493 each carry the phosphotyrosine modification. Lysine 544 participates in a covalent cross-link: Glycyl lysine isopeptide (Lys-Gly) (interchain with G-Cter in ubiquitin). Lysine 603 carries the post-translational modification N6-acetyllysine.

Belongs to the protein kinase superfamily. Tyr protein kinase family. SYK/ZAP-70 subfamily. As to quaternary structure, interacts with CD247/CD3Z; this interaction docks ZAP70 at the stimulated TCR. Interacts with NFAM1. Interacts with adapter protein SLA; this interaction negatively regulates T-cell receptor signaling. Interacts with FCRL3. Interacts with VAV1. Interacts with CBL; this interaction promotes ubiquitination, internalization and subsequent degradation of CD247/CD3Z. Identified in a complex with CBL and UBE2L3. Interacts with SHB. Interacts with adapter protein SLA2; this interaction negatively regulates T-cell receptor signaling. Interacts with CBLB. Interacts (via SH2 domains) with RHOH; this interaction regulates ZAP70 subcellular localization. Interacts with DEF6. Interacts (ubiquitinated form) with OTUD7B and UBASH3B. Post-translationally, phosphorylated on tyrosine residues upon T-cell antigen receptor (TCR) stimulation. Phosphorylation of Tyr-315 and Tyr-319 are essential for ZAP70 positive function on T-lymphocyte activation whereas Tyr-292 has a negative regulatory role. Within the C-terminal kinase domain, Tyr-492 and Tyr-493 are phosphorylated after TCR induction, Tyr-492 playing a negative regulatory role and Tyr-493 a positive. Tyr-493 is dephosphorylated by PTN22. In terms of processing, ubiquitinated in response to T cell activation. Deubiquitinated by OTUD7B. As to expression, expressed in T- and natural killer cells. Also present in early thymocytes and pro/pre B-cells.

Its subcellular location is the cytoplasm. The protein resides in the cell membrane. It catalyses the reaction L-tyrosyl-[protein] + ATP = O-phospho-L-tyrosyl-[protein] + ADP + H(+). Its activity is regulated as follows. Activated by phosphorylation at Tyr-493 in the activation loop. Inhibited by staurosporine. Tyrosine kinase that plays an essential role in regulation of the adaptive immune response. Regulates motility, adhesion and cytokine expression of mature T-cells, as well as thymocyte development. Also contributes to the development and activation of primary B-lymphocytes. When antigen presenting cells (APC) activate T-cell receptor (TCR), a serie of phosphorylations lead to the recruitment of ZAP70 to the doubly phosphorylated TCR component CD247/CD3Z through ITAM motif at the plasma membrane. This recruitment serves to localization to the stimulated TCR and to relieve its autoinhibited conformation. Release of ZAP70 active conformation is further stabilized by phosphorylation mediated by LCK. Subsequently, ZAP70 phosphorylates at least 2 essential adapter proteins: LAT and LCP2. In turn, a large number of signaling molecules are recruited and ultimately lead to lymphokine production, T-cell proliferation and differentiation. Furthermore, ZAP70 controls cytoskeleton modifications, adhesion and mobility of T-lymphocytes, thus ensuring correct delivery of effectors to the APC. ZAP70 is also required for TCR-CD247/CD3Z internalization and degradation through interaction with the E3 ubiquitin-protein ligase CBL and adapter proteins SLA and SLA2. Thus, ZAP70 regulates both T-cell activation switch on and switch off by modulating TCR expression at the T-cell surface. During thymocyte development, ZAP70 promotes survival and cell-cycle progression of developing thymocytes before positive selection (when cells are still CD4/CD8 double negative). Additionally, ZAP70-dependent signaling pathway may also contribute to primary B-cells formation and activation through B-cell receptor (BCR). The protein is Tyrosine-protein kinase ZAP-70 (ZAP70) of Homo sapiens (Human).